The primary structure comprises 65 residues: Large ribosomal subunit protein bL31 (65 aa).

Residues Cys-16, Cys-18, Cys-36, and Cys-39 each contribute to the Zn(2+) site.

It belongs to the bacterial ribosomal protein bL31 family. Type A subfamily. As to quaternary structure, part of the 50S ribosomal subunit. It depends on Zn(2+) as a cofactor.

In terms of biological role, binds the 23S rRNA. This is Large ribosomal subunit protein bL31 from Alkaliphilus metalliredigens (strain QYMF).